The following is a 1837-amino-acid chain: AF4/FMR2 family member lilli (1837 aa).

Disordered regions lie at residues 1-25, 65-109, 162-295, 455-592, 605-712, 797-852, 868-1250, 1267-1311, and 1344-1466; these read MAQQQQQQQHHHHLQHQQQQQQQQQ, NLYS…PRRL, IQQQ…LHNG, QQLP…KKKY, TGLL…PGNV, PKSQ…LQIP, NNMQ…GGAK, QQQQ…GLAS, and APSS…DPML. Residues 16–25 are compositionally biased toward low complexity; sequence HQQQQQQQQQ. Positions 84–109 are enriched in basic and acidic residues; the sequence is REKYERQQGIQSDDRETSLFSEPRRL. 3 stretches are compositionally biased toward low complexity: residues 162–179, 187–200, and 247–264; these read IQQQVSSSISSSASVASS, QTQQQQQQQQQQQQ, and NSNSSSITNNAAASSSSS. Residue Thr-468 is modified to Phosphothreonine. Residues 475–488 show a composition bias toward basic and acidic residues; that stretch reads LKIEKNPILEKQDS. The span at 490 to 500 shows a compositional bias: acidic residues; that stretch reads LENDLELSESE. 2 positions are modified to phosphoserine: Ser-497 and Ser-499. Composition is skewed to low complexity over residues 509-529 and 542-552; these read SPGSSSNGSESDSTESGSESS and QQQQQTQQQQL. A compositionally biased stretch (basic residues) spans 553–563; that stretch reads HGHHPQSHHHQ. Residues 564 to 583 show a composition bias toward low complexity; it reads QFLQQQLQRQQQQQQQQQQL. 2 stretches are compositionally biased toward gly residues: residues 612–633 and 641–673; these read GGLGSSSGNNSSGGGGGSGNGG and GSMGGSGGSSSSGGASGGGGGGGGSGSSSGIGS. Composition is skewed to polar residues over residues 678 to 690 and 698 to 711; these read NKTPSPTDSNKWN and PTSQTSSESVSPGN. Low complexity predominate over residues 815 to 837; that stretch reads SESATSGSSSSSCSSSDSAASAS. The span at 868 to 880 shows a compositional bias: polar residues; that stretch reads NNMQKSQSMSVTV. Positions 892-902 are enriched in basic residues; the sequence is PRQKKPRKKKM. Residues Ser-913 and Ser-914 each carry the phosphoserine modification. Composition is skewed to low complexity over residues 927 to 951 and 961 to 1013; these read VVAQAQAAVVPPPSTNSTTTSATTT and QQQQ…SSVL. A DNA-binding region (a.T hook) is located at residues 952-964; the sequence is KKGRGRPRKQQQQ. A phosphoserine mark is found at Ser-974 and Ser-976. The segment covering 1021 to 1033 has biased composition (polar residues); that stretch reads SQSSSNGNTPTKK. Composition is skewed to low complexity over residues 1034 to 1049, 1056 to 1091, 1130 to 1139, and 1157 to 1173; these read MSSIPMMPAAAASAAA, AVAAANAVAASSSSSDEESSSSSCSTSKSSSSSSSS, GSSSPTSSSS, and ISNSNSNSNNNVIVNNN. A compositionally biased stretch (polar residues) spans 1174 to 1184; it reads LQQQAMPQQSP. Residues 1189–1212 show a composition bias toward low complexity; that stretch reads LSGGSQQLSSSDSSSSSSGSSSSS. Residues 1217 to 1234 show a composition bias toward basic and acidic residues; that stretch reads DAKREKNRERKPKSDKNK. A compositionally biased stretch (low complexity) spans 1267 to 1276; sequence QQQQQQQQVQ. Residues 1345–1355 are compositionally biased toward polar residues; the sequence is PSSSNQQNGHL. Residues 1373–1386 show a composition bias toward basic residues; the sequence is KVKHEHHQLHHHSQ. Composition is skewed to basic and acidic residues over residues 1393 to 1407 and 1416 to 1432; these read VKPEPELDSLYETKF and FQLKQERDRDRNRERDQ. Ser-1517 carries the phosphoserine modification. Over residues 1550 to 1560 the composition is skewed to polar residues; sequence AVQTTPPTSVT. Disordered stretches follow at residues 1550–1571 and 1727–1756; these read AVQTTPPTSVTGAGAPASLVSQ and GNTPSSISPSNSVGSQGSGSNTPPGKIVPQ. Over residues 1727–1747 the composition is skewed to low complexity; sequence GNTPSSISPSNSVGSQGSGSN.

This sequence belongs to the AF4 family.

The protein resides in the nucleus. In terms of biological role, has a role in transcriptional regulation. Acts in parallel with the Ras/MAPK and the PI3K/PKB pathways in the control of cell identity and cellular growth. Essential for regulation of the cytoskeleton and cell growth but not for cell proliferation or growth rate. Required specifically for the microtubule-based basal transport of lipid droplets. Plays a partially redundant function downstream of Raf in cell fate specification in the developing eye. Pair-rule protein that regulates embryonic cellularization, gastrulation and segmentation. The protein is AF4/FMR2 family member lilli of Drosophila willistoni (Fruit fly).